We begin with the raw amino-acid sequence, 249 residues long: Isoprenyl transferase (249 aa).

The active site involves Asp25. Asp25 lines the Mg(2+) pocket. Substrate is bound by residues 26–29, Trp30, Arg38, His42, and 70–72; these read GNGR and STE. Asn73 acts as the Proton acceptor in catalysis. Substrate is bound by residues Trp74, Arg76, Arg197, and 203–205; that span reads RLS. Glu216 provides a ligand contact to Mg(2+).

This sequence belongs to the UPP synthase family. Homodimer. Mg(2+) serves as cofactor.

Functionally, catalyzes the condensation of isopentenyl diphosphate (IPP) with allylic pyrophosphates generating different type of terpenoids. The sequence is that of Isoprenyl transferase from Streptococcus mutans serotype c (strain ATCC 700610 / UA159).